The primary structure comprises 471 residues: Extracellular endo-alpha-(1-&gt;5)-L-arabinanase (471 aa).

An N-terminal signal peptide occupies residues 1–19 (MRFLFLMITLTALTGYILA). D32 (proton acceptor) is an active-site residue. Substrate-binding positions include D32, G117, 167-170 (NALD), 187-189 (SWF), and 219-223 (HSSME). The active-site Proton donor is E223. Residue H314 participates in Ca(2+) binding.

This sequence belongs to the glycosyl hydrolase 43 family. As to quaternary structure, monomer. Ca(2+) serves as cofactor.

Its subcellular location is the secreted. The enzyme catalyses Endohydrolysis of (1-&gt;5)-alpha-arabinofuranosidic linkages in (1-&gt;5)-arabinans.. It participates in glycan metabolism; L-arabinan degradation. Involved in the degradation of arabinan and is a key enzyme in the complete degradation of the plant cell wall. Catalyzes the internal cleavage of alpha-(1-&gt;5)-L-arabinofuranosyl residues in different arabinan-containing polysaccharides, and releases arabinotriose and arabinobiose as end products. It acts on branched arabinan (from sugar beet), but more slowly when compared to linear or debranched arabinan. The polypeptide is Extracellular endo-alpha-(1-&gt;5)-L-arabinanase (Thermotoga petrophila (strain ATCC BAA-488 / DSM 13995 / JCM 10881 / RKU-1)).